Here is a 177-residue protein sequence, read N- to C-terminus: Peptide methionine sulfoxide reductase MsrA 2 (177 aa).

Cys-12 is a catalytic residue.

Belongs to the MsrA Met sulfoxide reductase family.

The enzyme catalyses L-methionyl-[protein] + [thioredoxin]-disulfide + H2O = L-methionyl-(S)-S-oxide-[protein] + [thioredoxin]-dithiol. The catalysed reaction is [thioredoxin]-disulfide + L-methionine + H2O = L-methionine (S)-S-oxide + [thioredoxin]-dithiol. In terms of biological role, has an important function as a repair enzyme for proteins that have been inactivated by oxidation. Catalyzes the reversible oxidation-reduction of methionine sulfoxide in proteins to methionine. This chain is Peptide methionine sulfoxide reductase MsrA 2 (msrA2), found in Staphylococcus aureus (strain Mu50 / ATCC 700699).